A 4960-amino-acid chain; its full sequence is Malformin synthetase mlfA (4960 aa).

Residues 194–564 (ERHATNRPHS…CGRADTQVKL (371 aa)) are adenylation 1. The region spanning 705 to 778 (SRLEQEVQLA…EAASLAEVQE (74 aa)) is the Carrier 1 domain. Residue Ser-739 is modified to O-(pantetheine 4'-phosphoryl)serine. The tract at residues 816–1247 (EDVFPCTTMQ…ALNTLSLLQA (432 aa)) is condensation 1. The interval 1275-1650 (DRWVTRQPEG…GRKDTQVKLR (376 aa)) is adenylation 2. The 78-residue stretch at 1777-1854 (TPASELERTL…HLAAEVGEPA (78 aa)) folds into the Carrier 2 domain. Disordered stretches follow at residues 1855-1883 (GQSA…NDGV) and 1917-1943 (GGSS…KKNA). 2 stretches are compositionally biased toward low complexity: residues 1857 to 1881 (SASS…STND) and 1919 to 1936 (SSSN…SSSS). Residues 1989–2404 (EDIYPATALQ…AVSCSDKETL (416 aa)) form a condensation 2 region. Residues 2427–2819 (RRTPHAPAVC…IGRRDGQLKL (393 aa)) are adenylation 3. The region spanning 2955–3031 (RPVTSQEREM…QLICHINTIR (77 aa)) is the Carrier 3 domain. Ser-2992 is modified (O-(pantetheine 4'-phosphoryl)serine). Condensation regions lie at residues 3049-3464 (VALA…FTFP) and 3520-3889 (SGYV…EQLV). The adenylation 4 stretch occupies residues 3914-4304 (HNSRQAVCAW…VGRKDNQIKF (391 aa)). Residues 4438–4514 (MPSTAAERKM…DLSDQAKSLI (77 aa)) form the Carrier 4 domain. Residue Ser-4475 is modified to O-(pantetheine 4'-phosphoryl)serine. The interval 4551–4878 (DVLPTTSFQH…LQTIVQHQNN (328 aa)) is condensation 5.

The protein belongs to the NRP synthetase family.

The protein operates within secondary metabolite biosynthesis. Its function is as follows. Nonribosomal peptide synthetase; part of the gene cluster that mediates the biosynthesis of malformins, cyclic pentapeptides with a disulfide bond between 2 consecutive cysteins, that show potential anti-tumor as well as antimalarial and antitrypanosomal properties. The nonribosomal peptide synthetase mlfA is responsible of the formation of the cyclic pentapeptide. The malformin biosynthesis clusters in malformin-producing fungi also contain enzymes involved in the formation of the disulfide bond between the two consecutive cysteins within malformins, in addition to additional tailoring enzymes such as methyltransferases or oxidoreductases. They are also composed of up to 4 major facilitator superfamily transporters, and transcription factors probably involved in the regulation of the expression of those clusters. The chain is Malformin synthetase mlfA from Aspergillus neoniger (strain CBS 115656).